The chain runs to 364 residues: F-box/kelch-repeat protein At3g23880 (364 aa).

Positions 8 to 54 (MFSPHNLPLEMMEEILLRLPVKSLTRFKCVCSSWRSLISETLFALKH) constitute an F-box domain. Kelch repeat units lie at residues 169–215 (DYKV…SRSG) and 216–265 (IYIN…TLGD).

The chain is F-box/kelch-repeat protein At3g23880 from Arabidopsis thaliana (Mouse-ear cress).